Consider the following 187-residue polypeptide: dCTP deaminase (187 aa).

DCTP is bound by residues 110–115 (KSTYAR), 134–136 (TLE), glutamine 155, tyrosine 169, and glutamine 179. Glutamate 136 (proton donor/acceptor) is an active-site residue.

This sequence belongs to the dCTP deaminase family. As to quaternary structure, homotrimer.

It carries out the reaction dCTP + H2O + H(+) = dUTP + NH4(+). Its pathway is pyrimidine metabolism; dUMP biosynthesis; dUMP from dCTP (dUTP route): step 1/2. Catalyzes the deamination of dCTP to dUTP. The polypeptide is dCTP deaminase (Bordetella pertussis (strain Tohama I / ATCC BAA-589 / NCTC 13251)).